The chain runs to 471 residues: ATP synthase subunit beta (471 aa).

Position 156–163 (156–163) interacts with ATP; the sequence is GGAGVGKT.

This sequence belongs to the ATPase alpha/beta chains family. In terms of assembly, F-type ATPases have 2 components, CF(1) - the catalytic core - and CF(0) - the membrane proton channel. CF(1) has five subunits: alpha(3), beta(3), gamma(1), delta(1), epsilon(1). CF(0) has three main subunits: a(1), b(2) and c(9-12). The alpha and beta chains form an alternating ring which encloses part of the gamma chain. CF(1) is attached to CF(0) by a central stalk formed by the gamma and epsilon chains, while a peripheral stalk is formed by the delta and b chains.

It localises to the cell membrane. It carries out the reaction ATP + H2O + 4 H(+)(in) = ADP + phosphate + 5 H(+)(out). Produces ATP from ADP in the presence of a proton gradient across the membrane. The catalytic sites are hosted primarily by the beta subunits. The protein is ATP synthase subunit beta of Mycoplasmoides gallisepticum (strain R(low / passage 15 / clone 2)) (Mycoplasma gallisepticum).